The chain runs to 114 residues: NADH-ubiquinone oxidoreductase chain 3 (114 aa).

The next 3 membrane-spanning stretches (helical) occupy residues 4-24 (LVYI…SYLL), 55-75 (FYLI…ILPF), and 82-102 (VSLL…IGFI).

Belongs to the complex I subunit 3 family.

Its subcellular location is the mitochondrion membrane. The enzyme catalyses a ubiquinone + NADH + 5 H(+)(in) = a ubiquinol + NAD(+) + 4 H(+)(out). Its function is as follows. Core subunit of the mitochondrial membrane respiratory chain NADH dehydrogenase (Complex I) that is believed to belong to the minimal assembly required for catalysis. Complex I functions in the transfer of electrons from NADH to the respiratory chain. The immediate electron acceptor for the enzyme is believed to be ubiquinone. In Allomyces macrogynus, this protein is NADH-ubiquinone oxidoreductase chain 3 (ND3).